Reading from the N-terminus, the 203-residue chain is ATP-dependent Clp protease proteolytic subunit (203 aa).

Ser-100 acts as the Nucleophile in catalysis. His-125 is a catalytic residue.

It belongs to the peptidase S14 family. As to quaternary structure, component of the chloroplastic Clp protease core complex.

The protein localises to the plastid. The protein resides in the chloroplast stroma. The catalysed reaction is Hydrolysis of proteins to small peptides in the presence of ATP and magnesium. alpha-casein is the usual test substrate. In the absence of ATP, only oligopeptides shorter than five residues are hydrolyzed (such as succinyl-Leu-Tyr-|-NHMec, and Leu-Tyr-Leu-|-Tyr-Trp, in which cleavage of the -Tyr-|-Leu- and -Tyr-|-Trp bonds also occurs).. In terms of biological role, cleaves peptides in various proteins in a process that requires ATP hydrolysis. Has a chymotrypsin-like activity. Plays a major role in the degradation of misfolded proteins. In Dioscorea elephantipes (Elephant's foot yam), this protein is ATP-dependent Clp protease proteolytic subunit.